The sequence spans 992 residues: Leucine-rich repeat receptor-like serine/threonine-protein kinase BAM3 (992 aa).

An N-terminal signal peptide occupies residues 1-21 (MADKIFTFFLILSSISPLLCS). At 22 to 656 (SLISPLNLSL…ARSRGEISAK (635 aa)) the chain is on the extracellular side. Residue asparagine 28 is glycosylated (N-linked (GlcNAc...) asparagine). Cysteine 64 and cysteine 71 form a disulfide bridge. N-linked (GlcNAc...) asparagine glycans are attached at residues asparagine 75 and asparagine 87. 6 LRR repeats span residues 75 to 99 (NQSITRLDLSNLNISGTISPEISRL), 100 to 124 (SPSLVFLDISSNSFSGELPKEIYEL), 126 to 148 (GLEVLNISSNVFEGELETRGFSQ), 150 to 173 (TQLVTLDAYDNSFNGSLPLSLTTL), 174 to 199 (TRLEHLDLGGNYFDGEIPRSYGSFLS), and 201 to 221 (KFLSLSGNDLRGRIPNELANI). Asparagine 131 and asparagine 163 each carry an N-linked (GlcNAc...) asparagine glycan. N-linked (GlcNAc...) asparagine glycosylation occurs at asparagine 220. The CLE45 peptide binding signature appears at 226–231 (QLYLGY). 15 LRR repeats span residues 246 to 270 (LINLVHLDLANCSLKGSIPAELGNL), 271 to 294 (KNLEVLFLQTNELTGSVPRELGNM), 296 to 320 (SLKTLDLSNNFLEGEIPLELSGLQK), 322 to 342 (QLFNLFFNRLHGEIPEFVSEL), 343 to 366 (PDLQILKLWHNNFTGKIPSKLGSN), 368 to 391 (NLIEIDLSTNKLTGLIPESLCFGR), 393 to 414 (LKILILFNNFLFGPLPEDLGQC), 415 to 438 (EPLWRFRLGQNFLTSKLPKGLIYL), 439 to 462 (PNLSLLELQNNFLTGEIPEEEAGN), 465 to 489 (FSSLTQINLSNNRLSGPIPGSIRNL), 491 to 513 (SLQILLLGANRLSGQIPGEIGSL), 514 to 536 (KSLLKIDMSRNNFSGKFPPEFGD), 537 to 561 (CMSLTYLDLSHNQISGQIPVQISQI), 563 to 585 (ILNYLNVSWNSFNQSLPNELGYM), and 586 to 610 (KSLTSADFSHNNFSGSVPTSGQFSY). N-linked (GlcNAc...) asparagine glycosylation is found at asparagine 256 and asparagine 293. An N-linked (GlcNAc...) asparagine glycan is attached at asparagine 354. N-linked (GlcNAc...) asparagine glycans are attached at residues asparagine 440 and asparagine 472. A glycan (N-linked (GlcNAc...) asparagine) is linked at asparagine 525. Asparagine 568, asparagine 575, asparagine 597, asparagine 613, asparagine 631, and asparagine 635 each carry an N-linked (GlcNAc...) asparagine glycan. Residues 657-677 (FKLFFGLGLLGFFLVFVVLAV) traverse the membrane as a helical segment. At 678-992 (VKNRRMRKNN…ISQAKQPNTF (315 aa)) the chain is on the cytoplasmic side. The Protein kinase domain maps to 710–992 (VKENHVIGKG…ISQAKQPNTF (283 aa)). ATP is bound by residues 716–724 (IGKGGRGIV) and lysine 738. Catalysis depends on aspartate 836, which acts as the Proton acceptor.

The protein belongs to the protein kinase superfamily. Ser/Thr protein kinase family. As to quaternary structure, interacts with CLE45, especially in roots. Binds to the dimer CLV2/CRN. In terms of tissue distribution, expressed in seedlings, roots, leaves, stems, inflorescences, flowers and siliques. In roots, confined to protophloem and sieve element precursor cells.

The protein localises to the cell membrane. Its subcellular location is the endoplasmic reticulum membrane. The catalysed reaction is L-seryl-[protein] + ATP = O-phospho-L-seryl-[protein] + ADP + H(+). The enzyme catalyses L-threonyl-[protein] + ATP = O-phospho-L-threonyl-[protein] + ADP + H(+). In terms of biological role, necessary for male gametophyte development, as well as ovule specification and function. Required for the development of high-ordered vascular strands within the leaf and a correlated control of leaf shape, size and symmetry. LRR-rich receptor-like kinase (LRR-RLK) involved in the perception of CLE45 peptide ligand which mediates root growth inhibition by repressing protophloem differentiation; this mechanism requires CRN. BRX, BAM3, and CLE45 act together to regulate the transition of protophloem cells from proliferation to differentiation, thus impinging on postembryonic growth capacity of the root meristem. Necessary for CLE45 peptide-triggered accumulation of MAKR5 in developing sieve elements. This is Leucine-rich repeat receptor-like serine/threonine-protein kinase BAM3 from Arabidopsis thaliana (Mouse-ear cress).